The following is a 211-amino-acid chain: Putative ankyrin repeat protein R810 (211 aa).

ANK repeat units lie at residues 31-61 (TKFIKLYYLVKTHKSILKKIVKNGYFENLKY), 72-101 (NINDVLLLACKYGNLPIVKYLVSKGADICA), 103-131 (QNSPIKNATYYGHLDVVKYLVSNGAKFFG), 133-162 (YSSAIIIASSSGKLDIVKYFVPGKIYFCLE), and 163-191 (MEIALVCATENKHTNIVDYLNSMRSSYFD).

This is Putative ankyrin repeat protein R810 from Acanthamoeba polyphaga mimivirus (APMV).